The primary structure comprises 181 residues: uncharacterized protein (181 aa).

A disordered region spans residues 151-181 (AQKKKDFQEPENKHEQLTSTKAPCQENWSDF). The span at 154–166 (KKDFQEPENKHEQ) shows a compositional bias: basic and acidic residues. Over residues 167 to 181 (LTSTKAPCQENWSDF) the composition is skewed to polar residues.

This is an uncharacterized protein from Caenorhabditis elegans.